We begin with the raw amino-acid sequence, 141 residues long: Holo-[acyl-carrier-protein] synthase (141 aa).

Mg(2+) contacts are provided by Asp7 and Glu57.

Belongs to the P-Pant transferase superfamily. AcpS family. Mg(2+) serves as cofactor.

It localises to the cytoplasm. It carries out the reaction apo-[ACP] + CoA = holo-[ACP] + adenosine 3',5'-bisphosphate + H(+). Transfers the 4'-phosphopantetheine moiety from coenzyme A to a Ser of acyl-carrier-protein. The polypeptide is Holo-[acyl-carrier-protein] synthase (Corynebacterium efficiens (strain DSM 44549 / YS-314 / AJ 12310 / JCM 11189 / NBRC 100395)).